Consider the following 350-residue polypeptide: Atypical chemokine receptor 4 (350 aa).

At methionine 1–lysine 41 the chain is on the extracellular side. N-linked (GlcNAc...) asparagine glycans are attached at residues asparagine 6 and asparagine 19. Residues valine 42–tyrosine 66 form a helical membrane-spanning segment. The Cytoplasmic portion of the chain corresponds to alanine 67–tyrosine 79. Residues isoleucine 80–valine 99 traverse the membrane as a helical segment. The Extracellular segment spans residues asparagine 100–lysine 113. Cysteine 112 and cysteine 184 are oxidised to a cystine. The chain crosses the membrane as a helical span at residues valine 114–threonine 135. At aspartate 136–proline 153 the chain is on the cytoplasmic side. The chain crosses the membrane as a helical span at residues cysteine 154 to phenylalanine 175. At tyrosine 176–serine 199 the chain is on the extracellular side. Residues isoleucine 200–isoleucine 222 traverse the membrane as a helical segment. Over threonine 223 to valine 241 the chain is Cytoplasmic. Residues leucine 242–isoleucine 265 traverse the membrane as a helical segment. Residues aspartate 266–valine 283 are Extracellular-facing. A helical membrane pass occupies residues alanine 284–methionine 306. The Cytoplasmic portion of the chain corresponds to glycine 307–isoleucine 350.

This sequence belongs to the G-protein coupled receptor 1 family. Atypical chemokine receptor subfamily. In terms of assembly, forms heteromers with CXCR3. Interacts with ARRB1 and ARRB2. The Ser/Thr residues in the C-terminal cytoplasmic tail may be phosphorylated. Expressed in circumvallate and fungiform papillae, olfactory epithelium and lung. Lower expression in liver, kidney and tongue epithelium bearing no taste papillae. Very low expression in the cerebral cortex of the brain.

It localises to the early endosome. Its subcellular location is the recycling endosome. The protein resides in the cell membrane. Atypical chemokine receptor that controls chemokine levels and localization via high-affinity chemokine binding that is uncoupled from classic ligand-driven signal transduction cascades, resulting instead in chemokine sequestration, degradation, or transcytosis. Also known as interceptor (internalizing receptor) or chemokine-scavenging receptor or chemokine decoy receptor. Acts as a receptor for chemokines CCL2, CCL8, CCL13, CCL19, CCL21 and CCL25. Chemokine-binding does not activate G-protein-mediated signal transduction but instead induces beta-arrestin recruitment, leading to ligand internalization. Plays an important role in controlling the migration of immune and cancer cells that express chemokine receptors CCR7 and CCR9, by reducing the availability of CCL19, CCL21, and CCL25 through internalization. Negatively regulates CXCR3-induced chemotaxis. Regulates T-cell development in the thymus. The polypeptide is Atypical chemokine receptor 4 (ACKR4) (Bos taurus (Bovine)).